The following is a 116-amino-acid chain: Putative iron-sulfur cluster insertion protein ErpA (116 aa).

3 residues coordinate iron-sulfur cluster: Cys-44, Cys-108, and Cys-110.

The protein belongs to the HesB/IscA family. As to quaternary structure, homodimer. Iron-sulfur cluster serves as cofactor.

In terms of biological role, required for insertion of 4Fe-4S clusters. The polypeptide is Putative iron-sulfur cluster insertion protein ErpA (Thiobacillus denitrificans (strain ATCC 25259 / T1)).